Consider the following 443-residue polypeptide: Tubulin beta chain (443 aa).

Residues Gln-11, Glu-69, Ser-138, Gly-142, Thr-143, Gly-144, Asn-204, and Asn-226 each coordinate GTP. Residue Glu-69 coordinates Mg(2+).

This sequence belongs to the tubulin family. As to quaternary structure, dimer of alpha and beta chains. A typical microtubule is a hollow water-filled tube with an outer diameter of 25 nm and an inner diameter of 15 nM. Alpha-beta heterodimers associate head-to-tail to form protofilaments running lengthwise along the microtubule wall with the beta-tubulin subunit facing the microtubule plus end conferring a structural polarity. Microtubules usually have 13 protofilaments but different protofilament numbers can be found in some organisms and specialized cells. Mg(2+) serves as cofactor.

The protein resides in the cytoplasm. The protein localises to the cytoskeleton. Functionally, tubulin is the major constituent of microtubules, a cylinder consisting of laterally associated linear protofilaments composed of alpha- and beta-tubulin heterodimers. Microtubules grow by the addition of GTP-tubulin dimers to the microtubule end, where a stabilizing cap forms. Below the cap, tubulin dimers are in GDP-bound state, owing to GTPase activity of alpha-tubulin. The protein is Tubulin beta chain of Thalassiosira weissflogii (Marine diatom).